Here is a 445-residue protein sequence, read N- to C-terminus: Phosphoglucosamine mutase 1 (445 aa).

The active-site Phosphoserine intermediate is S102. The Mg(2+) site is built by S102, D241, D243, and D245. Residue S102 is modified to Phosphoserine.

This sequence belongs to the phosphohexose mutase family. It depends on Mg(2+) as a cofactor. In terms of processing, activated by phosphorylation.

The catalysed reaction is alpha-D-glucosamine 1-phosphate = D-glucosamine 6-phosphate. In terms of biological role, catalyzes the conversion of glucosamine-6-phosphate to glucosamine-1-phosphate. This Shewanella frigidimarina (strain NCIMB 400) protein is Phosphoglucosamine mutase 1.